Reading from the N-terminus, the 258-residue chain is 1-(5-phosphoribosyl)-5-[(5-phosphoribosylamino)methylideneamino] imidazole-4-carboxamide isomerase (258 aa).

Aspartate 17 (proton acceptor) is an active-site residue. Catalysis depends on aspartate 136, which acts as the Proton donor.

It belongs to the HisA/HisF family.

The protein localises to the cytoplasm. It catalyses the reaction 1-(5-phospho-beta-D-ribosyl)-5-[(5-phospho-beta-D-ribosylamino)methylideneamino]imidazole-4-carboxamide = 5-[(5-phospho-1-deoxy-D-ribulos-1-ylimino)methylamino]-1-(5-phospho-beta-D-ribosyl)imidazole-4-carboxamide. It functions in the pathway amino-acid biosynthesis; L-histidine biosynthesis; L-histidine from 5-phospho-alpha-D-ribose 1-diphosphate: step 4/9. The polypeptide is 1-(5-phosphoribosyl)-5-[(5-phosphoribosylamino)methylideneamino] imidazole-4-carboxamide isomerase (Corynebacterium jeikeium (strain K411)).